The sequence spans 798 residues: ABC transporter G family member 4 (798 aa).

Positions 1–51 (MEDIGNNNFEIIDDKSDEKNDENFEDKNSRNNINEEQILSNQQQQQQQQQQ) are disordered. A compositionally biased stretch (basic and acidic residues) spans 12–29 (IDDKSDEKNDENFEDKNS). The span at 30–41 (RNNINEEQILSN) shows a compositional bias: polar residues. Positions 34–83 (NEEQILSNQQQQQQQQQQQQQQQQQQQQQQQQQQQQQQEQQQFKNEVINT) form a coiled coil. A compositionally biased stretch (low complexity) spans 42-51 (QQQQQQQQQQ). An ABC transporter domain is found at 211-464 (IDIEDIESQV…SIDSNYKCPP (254 aa)). Residue 253–260 (GPSGSGKS) participates in ATP binding. 7 helical membrane-spanning segments follow: residues 540 to 560 (VVFF…SACF), 579 to 599 (LFFF…STFV), 628 to 648 (IVSS…IVHL), 656 to 676 (ILSL…VIAM), 687 to 707 (FSYC…LVPI), 713 to 733 (SFGW…IVII), and 771 to 791 (SIGI…IGLY). The region spanning 540–793 (VVFFSKIVIA…ILAYIGLYKF (254 aa)) is the ABC transmembrane type-2 domain.

The protein belongs to the ABC transporter superfamily. ABCG family. Eye pigment precursor importer (TC 3.A.1.204) subfamily.

It localises to the membrane. The protein is ABC transporter G family member 4 (abcG4) of Dictyostelium discoideum (Social amoeba).